The following is a 724-amino-acid chain: Probable dipeptidyl-peptidase 5 (724 aa).

The N-terminal stretch at 1-19 is a signal peptide; it reads MGALTWLSVVAAAASTALA. N-linked (GlcNAc...) asparagine glycosylation is found at Asn76, Asn97, Asn154, Asn257, Asn383, and Asn453. Ser563 acts as the Charge relay system in catalysis. N-linked (GlcNAc...) asparagine glycosylation is present at Asn610. Catalysis depends on charge relay system residues Asp646 and His678.

It belongs to the peptidase S9C family.

It localises to the secreted. Functionally, extracellular dipeptidyl-peptidase which removes N-terminal dipeptides sequentially from polypeptides having unsubstituted N-termini. This Aspergillus clavatus (strain ATCC 1007 / CBS 513.65 / DSM 816 / NCTC 3887 / NRRL 1 / QM 1276 / 107) protein is Probable dipeptidyl-peptidase 5 (dpp5).